A 265-amino-acid chain; its full sequence is S-adenosylmethionine decarboxylase proenzyme (265 aa).

The Schiff-base intermediate with substrate; via pyruvic acid role is filled by S114. S114 bears the Pyruvic acid (Ser); by autocatalysis mark. Residue H119 is the Proton acceptor; for processing activity of the active site. C142 (proton donor; for catalytic activity) is an active-site residue.

The protein belongs to the prokaryotic AdoMetDC family. Type 2 subfamily. Heterooctamer of four alpha and four beta chains arranged as a tetramer of alpha/beta heterodimers. Pyruvate serves as cofactor. In terms of processing, is synthesized initially as an inactive proenzyme. Formation of the active enzyme involves a self-maturation process in which the active site pyruvoyl group is generated from an internal serine residue via an autocatalytic post-translational modification. Two non-identical subunits are generated from the proenzyme in this reaction, and the pyruvate is formed at the N-terminus of the alpha chain, which is derived from the carboxyl end of the proenzyme. The post-translation cleavage follows an unusual pathway, termed non-hydrolytic serinolysis, in which the side chain hydroxyl group of the serine supplies its oxygen atom to form the C-terminus of the beta chain, while the remainder of the serine residue undergoes an oxidative deamination to produce ammonia and the pyruvoyl group blocking the N-terminus of the alpha chain.

It catalyses the reaction S-adenosyl-L-methionine + H(+) = S-adenosyl 3-(methylsulfanyl)propylamine + CO2. The protein operates within amine and polyamine biosynthesis; S-adenosylmethioninamine biosynthesis; S-adenosylmethioninamine from S-adenosyl-L-methionine: step 1/1. In terms of biological role, catalyzes the decarboxylation of S-adenosylmethionine to S-adenosylmethioninamine (dcAdoMet), the propylamine donor required for the synthesis of the polyamines spermine and spermidine from the diamine putrescine. This is S-adenosylmethionine decarboxylase proenzyme from Buchnera aphidicola subsp. Acyrthosiphon pisum (strain APS) (Acyrthosiphon pisum symbiotic bacterium).